Reading from the N-terminus, the 505-residue chain is Deoxyguanosinetriphosphate triphosphohydrolase (505 aa).

Residues 66 to 273 form the HD domain; sequence RLTHSMEVQQ…MEAADDISYC (208 aa).

Belongs to the dGTPase family. Type 1 subfamily. As to quaternary structure, homotetramer. The cofactor is Mg(2+).

The enzyme catalyses dGTP + H2O = 2'-deoxyguanosine + triphosphate + H(+). Functionally, dGTPase preferentially hydrolyzes dGTP over the other canonical NTPs. This Salmonella schwarzengrund (strain CVM19633) protein is Deoxyguanosinetriphosphate triphosphohydrolase.